Consider the following 444-residue polypeptide: U-box domain-containing protein 31 (444 aa).

The U-box domain maps to 59–133 (EIPSVFICPI…YTWFSQKYVL (75 aa)). ARM repeat units follow at residues 301-340 (KQVR…SLCL) and 343-382 (EGRI…SVCK).

It catalyses the reaction S-ubiquitinyl-[E2 ubiquitin-conjugating enzyme]-L-cysteine + [acceptor protein]-L-lysine = [E2 ubiquitin-conjugating enzyme]-L-cysteine + N(6)-ubiquitinyl-[acceptor protein]-L-lysine.. The protein operates within protein modification; protein ubiquitination. In terms of biological role, functions as an E3 ubiquitin ligase. The sequence is that of U-box domain-containing protein 31 (PUB31) from Arabidopsis thaliana (Mouse-ear cress).